The chain runs to 448 residues: UDP-N-acetylmuramoylalanine--D-glutamate ligase (448 aa).

116-122 (GSNAKST) contacts ATP.

This sequence belongs to the MurCDEF family.

The protein localises to the cytoplasm. The enzyme catalyses UDP-N-acetyl-alpha-D-muramoyl-L-alanine + D-glutamate + ATP = UDP-N-acetyl-alpha-D-muramoyl-L-alanyl-D-glutamate + ADP + phosphate + H(+). It functions in the pathway cell wall biogenesis; peptidoglycan biosynthesis. Cell wall formation. Catalyzes the addition of glutamate to the nucleotide precursor UDP-N-acetylmuramoyl-L-alanine (UMA). This is UDP-N-acetylmuramoylalanine--D-glutamate ligase from Pseudomonas fluorescens (strain Pf0-1).